Here is a 464-residue protein sequence, read N- to C-terminus: ERO1-like protein alpha (464 aa).

The N-terminal stretch at 1–23 (MGRAWGLLVGLLGVVWLLRLGHG) is a signal peptide. 8 disulfide bridges follow: cysteine 35/cysteine 48, cysteine 37/cysteine 46, cysteine 85/cysteine 387, cysteine 94/cysteine 99, cysteine 94/cysteine 130, cysteine 99/cysteine 104, cysteine 207/cysteine 237, and cysteine 390/cysteine 393. Residues serine 106, serine 142, and serine 144 each carry the phosphoserine modification. The FAD site is built by arginine 186, threonine 188, and tryptophan 199. Residues serine 248 and histidine 251 each contribute to the FAD site. The N-linked (GlcNAc...) asparagine glycan is linked to asparagine 276. Residues arginine 283 and arginine 296 each contribute to the FAD site. Asparagine 380 is a glycosylation site (N-linked (GlcNAc...) asparagine).

It belongs to the EROs family. As to quaternary structure, predominantly monomer. May function both as a monomer and a homodimer. Interacts with PDILT. Interacts with ERP44; the interaction results in retention of ERO1A in the endoplasmic reticulum. Requires FAD as cofactor. N-glycosylated. In terms of processing, the Cys-94/Cys-99 and Cys-390/Cys-393 disulfide bonds constitute the redox-active center. The Cys-94/Cys-99 disulfide bond may accept electron from P4HB and funnel them to the active site disulfide Cys-390/Cys-393. The regulatory Cys-99/Cys-104 disulfide bond stabilizes the other regulatory bond Cys-94/Cys-130. Post-translationally, phosphorylated on Ser-144 by FAM20C in the Golgi which increases its enzymatic activity. Phosphorylation is induced by lactation. It is also induced by hypoxia and reductive stress. As to expression, widely expressed (at protein level). In the mammary gland, expressed at higher levels in lactating mice than in virgin mice (at protein level).

The protein resides in the endoplasmic reticulum membrane. It is found in the golgi apparatus lumen. The protein localises to the secreted. Its subcellular location is the cell projection. It localises to the dendrite. With respect to regulation, enzyme activity is tightly regulated to prevent the accumulation of reactive oxygen species in the endoplasmic reticulum. Reversibly down-regulated by the formation of disulfide bonds between the active site Cys-94 and Cys-130, and between Cys-99 and Cys-104. Glutathione may be required to regulate its activity in the endoplasmic reticulum. Its function is as follows. Oxidoreductase involved in disulfide bond formation in the endoplasmic reticulum. Efficiently reoxidizes P4HB/PDI, the enzyme catalyzing protein disulfide formation, in order to allow P4HB to sustain additional rounds of disulfide formation. Following P4HB reoxidation, passes its electrons to molecular oxygen via FAD, leading to the production of reactive oxygen species (ROS) in the cell. Required for the proper folding of immunoglobulins. Plays an important role in ER stress-induced, CHOP-dependent apoptosis by activating the inositol 1,4,5-trisphosphate receptor IP3R1. This Mus musculus (Mouse) protein is ERO1-like protein alpha.